The following is a 344-amino-acid chain: Acireductone dioxygenase (344 aa).

Residues histidine 92, histidine 94, glutamate 98, and histidine 137 each contribute to the Fe(2+) site. Ni(2+) contacts are provided by histidine 92, histidine 94, glutamate 98, and histidine 137.

It belongs to the acireductone dioxygenase (ARD) family. The cofactor is Fe(2+). It depends on Ni(2+) as a cofactor.

The protein localises to the cytoplasm. The protein resides in the nucleus. The catalysed reaction is 1,2-dihydroxy-5-(methylsulfanyl)pent-1-en-3-one + O2 = 4-methylsulfanyl-2-oxobutanoate + formate + 2 H(+). It carries out the reaction 1,2-dihydroxy-5-(methylsulfanyl)pent-1-en-3-one + O2 = 3-(methylsulfanyl)propanoate + CO + formate + 2 H(+). It participates in amino-acid biosynthesis; L-methionine biosynthesis via salvage pathway; L-methionine from S-methyl-5-thio-alpha-D-ribose 1-phosphate: step 5/6. Its function is as follows. Catalyzes 2 different reactions between oxygen and the acireductone 1,2-dihydroxy-3-keto-5-methylthiopentene (DHK-MTPene) depending upon the metal bound in the active site. Fe-containing acireductone dioxygenase (Fe-ARD) produces formate and 2-keto-4-methylthiobutyrate (KMTB), the alpha-ketoacid precursor of methionine in the methionine recycle pathway. Ni-containing acireductone dioxygenase (Ni-ARD) produces methylthiopropionate, carbon monoxide and formate, and does not lie on the methionine recycle pathway. The sequence is that of Acireductone dioxygenase from Leishmania braziliensis.